Reading from the N-terminus, the 55-residue chain is U17-myrmicitoxin-Mri1b (55 aa).

The first 31 residues, 1–31, serve as a signal peptide directing secretion; the sequence is MENSRTSTFTAYVTVAFLLISTFVTMVVTES. A Pyrrolidone carboxylic acid modification is found at glutamine 32.

Post-translationally, contains 1 disulfide bond. As to expression, expressed by the venom gland.

Its subcellular location is the secreted. This Manica rubida (European giant red ant) protein is U17-myrmicitoxin-Mri1b.